A 249-amino-acid polypeptide reads, in one-letter code: E3 ubiquitin-protein ligase RMA1 (249 aa).

Residues 48 to 97 form an RING-type zinc finger; the sequence is CNICLDSVQEPVVTLCGHLFCWPCIHKWLDVQSFSTSDEYQRHRQCPVCK. A helical; Anchor for type IV membrane protein transmembrane segment spans residues 231–248; that stretch reads LGRIFFFFMCCVVLCLLL.

Ubiquitous. Highly expressed in roots.

The protein resides in the endoplasmic reticulum membrane. It carries out the reaction S-ubiquitinyl-[E2 ubiquitin-conjugating enzyme]-L-cysteine + [acceptor protein]-L-lysine = [E2 ubiquitin-conjugating enzyme]-L-cysteine + N(6)-ubiquitinyl-[acceptor protein]-L-lysine.. It participates in protein modification; protein ubiquitination. Its function is as follows. E3 ubiquitin-protein ligase that promotes the ubiquitination and proteasomal degradation of aquaporin PIP2-1. Forms a ubiquitin ligase complex in cooperation with the E2 enzymes UCB8/UCB10. The sequence is that of E3 ubiquitin-protein ligase RMA1 (RMA1) from Arabidopsis thaliana (Mouse-ear cress).